Here is a 239-residue protein sequence, read N- to C-terminus: Ribosomal RNA small subunit methyltransferase G (239 aa).

Residues Gly77, Phe82, 128–129 (AE), and Arg147 contribute to the S-adenosyl-L-methionine site. The tract at residues 216–239 (EKKKQTPKKYPRKPGTPNKSPIEG) is disordered.

The protein belongs to the methyltransferase superfamily. RNA methyltransferase RsmG family.

It localises to the cytoplasm. Its function is as follows. Specifically methylates the N7 position of guanine in position 535 of 16S rRNA. The polypeptide is Ribosomal RNA small subunit methyltransferase G (Bacillus pumilus (strain SAFR-032)).